A 231-amino-acid polypeptide reads, in one-letter code: Large ribosomal subunit protein uL1 (231 aa).

This sequence belongs to the universal ribosomal protein uL1 family. As to quaternary structure, part of the 50S ribosomal subunit.

Functionally, binds directly to 23S rRNA. The L1 stalk is quite mobile in the ribosome, and is involved in E site tRNA release. In terms of biological role, protein L1 is also a translational repressor protein, it controls the translation of the L11 operon by binding to its mRNA. The polypeptide is Large ribosomal subunit protein uL1 (Moorella thermoacetica (strain ATCC 39073 / JCM 9320)).